The primary structure comprises 147 residues: 3-dehydroquinate dehydratase (147 aa).

The Proton acceptor role is filled by Tyr-23. Substrate-binding residues include Asn-75, His-81, and Asp-88. The active-site Proton donor is the His-101. Residues 102–103 (LS) and Arg-112 contribute to the substrate site.

This sequence belongs to the type-II 3-dehydroquinase family. As to quaternary structure, homododecamer.

The catalysed reaction is 3-dehydroquinate = 3-dehydroshikimate + H2O. The protein operates within metabolic intermediate biosynthesis; chorismate biosynthesis; chorismate from D-erythrose 4-phosphate and phosphoenolpyruvate: step 3/7. Its function is as follows. Catalyzes a trans-dehydration via an enolate intermediate. In Nitrosococcus oceani (strain ATCC 19707 / BCRC 17464 / JCM 30415 / NCIMB 11848 / C-107), this protein is 3-dehydroquinate dehydratase.